Reading from the N-terminus, the 138-residue chain is Small ribosomal subunit protein uS11c (138 aa).

A disordered region spans residues 1-23; it reads MAKPIPRIGSRKNGRIGSRKSGR. Residues 9–23 are compositionally biased toward basic residues; the sequence is GSRKNGRIGSRKSGR.

The protein belongs to the universal ribosomal protein uS11 family. In terms of assembly, part of the 30S ribosomal subunit.

It localises to the plastid. Its subcellular location is the chloroplast. The sequence is that of Small ribosomal subunit protein uS11c from Buxus microphylla (Littleleaf boxwood).